The following is a 325-amino-acid chain: GMP reductase (325 aa).

The active-site Thioimidate intermediate is Cys-174. 203–226 serves as a coordination point for NADP(+); it reads LIADGGIRTHGDIAKSIRFGASMV.

It belongs to the IMPDH/GMPR family. GuaC type 2 subfamily.

It carries out the reaction IMP + NH4(+) + NADP(+) = GMP + NADPH + 2 H(+). Its function is as follows. Catalyzes the irreversible NADPH-dependent deamination of GMP to IMP. It functions in the conversion of nucleobase, nucleoside and nucleotide derivatives of G to A nucleotides, and in maintaining the intracellular balance of A and G nucleotides. This chain is GMP reductase, found in Staphylococcus aureus (strain JH9).